The following is a 31-amino-acid chain: Cytochrome b6-f complex subunit 6 (31 aa).

Residues 4–24 traverse the membrane as a helical segment; that stretch reads VISYFGFLLVALAFTLVTYLG.

It belongs to the PetL family. As to quaternary structure, the 4 large subunits of the cytochrome b6-f complex are cytochrome b6, subunit IV (17 kDa polypeptide, PetD), cytochrome f and the Rieske protein, while the 4 small subunits are PetG, PetL, PetM and PetN. The complex functions as a dimer.

The protein localises to the plastid. The protein resides in the chloroplast thylakoid membrane. In terms of biological role, component of the cytochrome b6-f complex, which mediates electron transfer between photosystem II (PSII) and photosystem I (PSI), cyclic electron flow around PSI, and state transitions. PetL is important for photoautotrophic growth as well as for electron transfer efficiency and stability of the cytochrome b6-f complex. This chain is Cytochrome b6-f complex subunit 6, found in Nephroselmis olivacea (Green alga).